Reading from the N-terminus, the 108-residue chain is uncharacterized protein (108 aa).

Residues Phe7–Leu27 traverse the membrane as a helical segment.

This sequence to N.crassa NCU05373.1.

The protein localises to the membrane. This is an uncharacterized protein from Schizosaccharomyces pombe (strain 972 / ATCC 24843) (Fission yeast).